Consider the following 455-residue polypeptide: Rho GTPase-activating protein 3 (455 aa).

Positions 1 to 12 (MTNFSRSKSTGT) are enriched in polar residues. Residues 1-68 (MTNFSRSKST…HASRSGNGSG (68 aa)) are disordered. Positions 24-33 (GPDKYENIHN) are enriched in basic and acidic residues. The span at 43 to 54 (STTSTDYYDAST) shows a compositional bias: low complexity. Residues 55–64 (PLSSHASRSG) are compositionally biased toward polar residues. Positions 105–118 (IGWPTEVKHVSHVT) constitute a CRIB domain. The Rho-GAP domain occupies 153–331 (KSMQCSYDDR…LILMNLKERE (179 aa)). 2 disordered regions span residues 342–366 (KQTSDPSEEWESQHSEILSPEKPNN) and 432–455 (FVSNRDEGRKGREAWSSRLSSLPW). The segment covering 435 to 446 (NRDEGRKGREAW) has biased composition (basic and acidic residues).

In terms of tissue distribution, expressed in differentiating xylem cells.

Its subcellular location is the cell membrane. In terms of biological role, acts as a GTPase activator for the Rac-type GTPase by converting it to an inactive GDP-bound state. Involved in secondary wall pattern formation. In association with ROPGEF4, mediates local activation of ARAC10/ROP11 to initiate the distinct pattern of secondary cell walls in xylem cells. This chain is Rho GTPase-activating protein 3 (ROPGAP3), found in Arabidopsis thaliana (Mouse-ear cress).